The sequence spans 431 residues: MLDIQLLRKDLDGVAKRLADRGYTLDVAAFAALEAERRETQTRTEEMQARRNSLSKQIGAMKGKGEDTSAVMAEVGGIGDEMKASAAKLDDIQKRLSELLQGVPNLPHESVPMGKDETGNVEVRRWGTPRQFDFEVKDHVDVGTPLGLDFETGAKLSGARFTMLRGQIARLHRALAQFMIDTHTQQHGYTEVYTPYIVNPEILYGTGQLPKFADDMFRVEKGGDENTVTQYLISTSEISLTNTVRDSILEADALPIKLTAHSPCFRSEAGSYGRDTRGLIRQHQFDKVEMVQIVAPETSYAALEEMVGHAETILQKLELPYRVITLCTGDMGFSAAKTYDLEVWVPAQNTYREISSCSNTESFQARRMQARYRNAQGKPELVHTLNGSGLAVGRTLVAVLENFQNADGSVTVPAALRPYLGGIERLEVAAG.

An L-serine-binding site is contributed by 235 to 237; the sequence is TSE. 266–268 contacts ATP; the sequence is RSE. Glu-289 lines the L-serine pocket. Residue 353-356 participates in ATP binding; that stretch reads EISS. L-serine is bound at residue Ser-388.

It belongs to the class-II aminoacyl-tRNA synthetase family. Type-1 seryl-tRNA synthetase subfamily. In terms of assembly, homodimer. The tRNA molecule binds across the dimer.

It localises to the cytoplasm. The catalysed reaction is tRNA(Ser) + L-serine + ATP = L-seryl-tRNA(Ser) + AMP + diphosphate + H(+). It carries out the reaction tRNA(Sec) + L-serine + ATP = L-seryl-tRNA(Sec) + AMP + diphosphate + H(+). It functions in the pathway aminoacyl-tRNA biosynthesis; selenocysteinyl-tRNA(Sec) biosynthesis; L-seryl-tRNA(Sec) from L-serine and tRNA(Sec): step 1/1. In terms of biological role, catalyzes the attachment of serine to tRNA(Ser). Is also able to aminoacylate tRNA(Sec) with serine, to form the misacylated tRNA L-seryl-tRNA(Sec), which will be further converted into selenocysteinyl-tRNA(Sec). The chain is Serine--tRNA ligase from Paraburkholderia phytofirmans (strain DSM 17436 / LMG 22146 / PsJN) (Burkholderia phytofirmans).